The sequence spans 435 residues: Bystin (435 aa).

Residues 1–102 (MPKFKAARGA…VPQDGSDDEE (102 aa)) form a disordered region. R40 is modified (omega-N-methylarginine). Over residues 71 to 87 (AEHGSGDRPAVPRERTT) the composition is skewed to basic and acidic residues. Phosphoserine is present on S98. T154 carries the phosphothreonine modification. Residues S165 and S412 each carry the phosphoserine modification.

Belongs to the bystin family. As to quaternary structure, binds trophinin, tastin and cytokeratins.

The protein localises to the cytoplasm. It localises to the nucleus. Its subcellular location is the nucleolus. Functionally, required for processing of 20S pre-rRNA precursor and biogenesis of 40S ribosomal subunits. The protein is Bystin (BYSL) of Bos taurus (Bovine).